Consider the following 25-residue polypeptide: Mu-conotoxin CnIIIB (25 aa).

Glutamine 1 carries the pyrrolidone carboxylic acid; partial modification. 3 disulfide bridges follow: cysteine 3/cysteine 15, cysteine 4/cysteine 21, and cysteine 10/cysteine 22.

It belongs to the conotoxin M superfamily. As to expression, expressed by the venom duct.

The protein resides in the secreted. Functionally, mu-conotoxins block voltage-gated sodium channels (Nav). This synthetic toxin blocks slightly but irreversibly tetrodotoxin-resistant VGSCs. This Conus consors (Singed cone) protein is Mu-conotoxin CnIIIB.